The chain runs to 144 residues: Large ribosomal subunit protein uL11 (144 aa).

Belongs to the universal ribosomal protein uL11 family. As to quaternary structure, part of the ribosomal stalk of the 50S ribosomal subunit. Interacts with L10 and the large rRNA to form the base of the stalk. L10 forms an elongated spine to which L12 dimers bind in a sequential fashion forming a multimeric L10(L12)X complex. One or more lysine residues are methylated.

Forms part of the ribosomal stalk which helps the ribosome interact with GTP-bound translation factors. The polypeptide is Large ribosomal subunit protein uL11 (Deinococcus geothermalis (strain DSM 11300 / CIP 105573 / AG-3a)).